We begin with the raw amino-acid sequence, 326 residues long: Vitamin B12 import system permease protein BtuC (326 aa).

A run of 9 helical transmembrane segments spans residues tryptophan 15–glutamate 35, leucine 61–phenylalanine 81, proline 88–glycine 108, leucine 112–leucine 132, leucine 146–phenylalanine 166, glycine 184–isoleucine 204, glycine 240–isoleucine 260, valine 274–alanine 294, and glutamate 302–leucine 322.

Belongs to the binding-protein-dependent transport system permease family. FecCD subfamily. As to quaternary structure, the complex is composed of two ATP-binding proteins (BtuD), two transmembrane proteins (BtuC) and a solute-binding protein (BtuF).

Its subcellular location is the cell inner membrane. In terms of biological role, part of the ABC transporter complex BtuCDF involved in vitamin B12 import. Involved in the translocation of the substrate across the membrane. The chain is Vitamin B12 import system permease protein BtuC from Escherichia coli O7:K1 (strain IAI39 / ExPEC).